The primary structure comprises 592 residues: Cyclin-dependent kinase-like 3 (592 aa).

The Protein kinase domain occupies 4–286 (YETLGKVGEG…SSDLLHHEYF (283 aa)). ATP-binding positions include 10-18 (VGEGSYGTV) and lysine 33. The [NKR]KIAxRE motif lies at 44–50 (NKIAMRE). The active-site Proton acceptor is the aspartate 125. Phosphothreonine is present on threonine 158. Tyrosine 160 carries the phosphotyrosine modification. A compositionally biased stretch (basic and acidic residues) spans 368-379 (GDISEPKKKEYE). Disordered stretches follow at residues 368 to 390 (GDISEPKKKEYEGGLGQQDANEN) and 459 to 485 (RAKKRRTSSQSIGQVMPNSRQEDPGPI). The span at 466 to 477 (SSQSIGQVMPNS) shows a compositional bias: polar residues.

It belongs to the protein kinase superfamily. CMGC Ser/Thr protein kinase family. CDC2/CDKX subfamily.

The protein resides in the cytoplasm. The enzyme catalyses L-seryl-[protein] + ATP = O-phospho-L-seryl-[protein] + ADP + H(+). The catalysed reaction is L-threonyl-[protein] + ATP = O-phospho-L-threonyl-[protein] + ADP + H(+). This is Cyclin-dependent kinase-like 3 from Homo sapiens (Human).